Here is a 322-residue protein sequence, read N- to C-terminus: Lipoyl synthase (322 aa).

Over residues 1 to 12 (MVTVLNTVNQSG) the composition is skewed to polar residues. The interval 1-22 (MVTVLNTVNQSGRLRHPEKAHR) is disordered. Cysteine 60, cysteine 65, cysteine 71, cysteine 86, cysteine 90, cysteine 93, and serine 299 together coordinate [4Fe-4S] cluster. The 217-residue stretch at 72–288 (WEKKHATFMI…ETIGKTKGFL (217 aa)) folds into the Radical SAM core domain.

It belongs to the radical SAM superfamily. Lipoyl synthase family. The cofactor is [4Fe-4S] cluster.

The protein localises to the cytoplasm. It carries out the reaction [[Fe-S] cluster scaffold protein carrying a second [4Fe-4S](2+) cluster] + N(6)-octanoyl-L-lysyl-[protein] + 2 oxidized [2Fe-2S]-[ferredoxin] + 2 S-adenosyl-L-methionine + 4 H(+) = [[Fe-S] cluster scaffold protein] + N(6)-[(R)-dihydrolipoyl]-L-lysyl-[protein] + 4 Fe(3+) + 2 hydrogen sulfide + 2 5'-deoxyadenosine + 2 L-methionine + 2 reduced [2Fe-2S]-[ferredoxin]. Its pathway is protein modification; protein lipoylation via endogenous pathway; protein N(6)-(lipoyl)lysine from octanoyl-[acyl-carrier-protein]: step 2/2. Catalyzes the radical-mediated insertion of two sulfur atoms into the C-6 and C-8 positions of the octanoyl moiety bound to the lipoyl domains of lipoate-dependent enzymes, thereby converting the octanoylated domains into lipoylated derivatives. This chain is Lipoyl synthase, found in Brucella abortus (strain S19).